We begin with the raw amino-acid sequence, 159 residues long: 2-C-methyl-D-erythritol 2,4-cyclodiphosphate synthase (159 aa).

Residues D8 and H10 each contribute to the a divalent metal cation site. Residues D8–H10 and H34–S35 each bind 4-CDP-2-C-methyl-D-erythritol 2-phosphate. A divalent metal cation is bound at residue H42. 4-CDP-2-C-methyl-D-erythritol 2-phosphate is bound by residues D56 to G58, F61 to D65, A100 to L106, T132 to E135, F139, and R142.

The protein belongs to the IspF family. In terms of assembly, homotrimer. It depends on a divalent metal cation as a cofactor.

The catalysed reaction is 4-CDP-2-C-methyl-D-erythritol 2-phosphate = 2-C-methyl-D-erythritol 2,4-cyclic diphosphate + CMP. It participates in isoprenoid biosynthesis; isopentenyl diphosphate biosynthesis via DXP pathway; isopentenyl diphosphate from 1-deoxy-D-xylulose 5-phosphate: step 4/6. In terms of biological role, involved in the biosynthesis of isopentenyl diphosphate (IPP) and dimethylallyl diphosphate (DMAPP), two major building blocks of isoprenoid compounds. Catalyzes the conversion of 4-diphosphocytidyl-2-C-methyl-D-erythritol 2-phosphate (CDP-ME2P) to 2-C-methyl-D-erythritol 2,4-cyclodiphosphate (ME-CPP) with a corresponding release of cytidine 5-monophosphate (CMP). The polypeptide is 2-C-methyl-D-erythritol 2,4-cyclodiphosphate synthase (Salmonella typhi).